A 32-amino-acid polypeptide reads, in one-letter code: Tail virion protein G9P (32 aa).

A helical transmembrane segment spans residues 8-24; it reads FASFVLGWCLRSGITYF.

It belongs to the inovirus G9P protein family.

The protein resides in the virion. The protein localises to the host membrane. May initiate with G7P the virion concomitant assembly-budding process, by interacting with the packaging signal of the viral genome. The assembly-budding takes place at the host inner membrane. In turn, G7P and G9P are present at the end of the filamentous virion that emerges first from the bacterial host. The protein is Tail virion protein G9P (IX) of Escherichia coli (Bacteriophage f1).